The sequence spans 267 residues: 3-isopropylmalate dehydratase large subunit (267 aa).

[4Fe-4S] cluster is bound by residues C146, C206, and C209.

It belongs to the aconitase/IPM isomerase family. LeuC type 1 subfamily. Heterodimer of LeuC and LeuD. It depends on [4Fe-4S] cluster as a cofactor.

It carries out the reaction (2R,3S)-3-isopropylmalate = (2S)-2-isopropylmalate. It functions in the pathway amino-acid biosynthesis; L-leucine biosynthesis; L-leucine from 3-methyl-2-oxobutanoate: step 2/4. In terms of biological role, catalyzes the isomerization between 2-isopropylmalate and 3-isopropylmalate, via the formation of 2-isopropylmaleate. This Cupriavidus necator (Alcaligenes eutrophus) protein is 3-isopropylmalate dehydratase large subunit (leuC).